The following is a 119-amino-acid chain: Large ribosomal subunit protein bL20 (119 aa).

Belongs to the bacterial ribosomal protein bL20 family.

Its function is as follows. Binds directly to 23S ribosomal RNA and is necessary for the in vitro assembly process of the 50S ribosomal subunit. It is not involved in the protein synthesizing functions of that subunit. The chain is Large ribosomal subunit protein bL20 from Albidiferax ferrireducens (strain ATCC BAA-621 / DSM 15236 / T118) (Rhodoferax ferrireducens).